Reading from the N-terminus, the 335-residue chain is G-protein coupled receptor 157 (335 aa).

Residues 1–15 are Extracellular-facing; sequence MQPSPPPTELVPSER. A helical transmembrane segment spans residues 16-36; it reads AVVLLSCALSALGSGLLVATH. The Cytoplasmic portion of the chain corresponds to 37 to 48; it reads ALWPDLRSRARR. The helical transmembrane segment at 49–69 threads the bilayer; the sequence is LLLFLSLADLLSAASYFYGVL. Topologically, residues 70 to 87 are extracellular; that stretch reads QNFAGPSWDCVLQGALST. A helical membrane pass occupies residues 88 to 108; it reads FANTSSFFWTVAIALYLYLSI. Topologically, residues 109-119 are cytoplasmic; that stretch reads VRAARGPRTDR. A helical transmembrane segment spans residues 120–140; that stretch reads LLWAFHVVSWGVPLVITVAAV. Over 141-166 the chain is Extracellular; the sequence is ALKKIGYDASDVSVGWCWIDLEAKDH. Residues 167–187 traverse the membrane as a helical segment; sequence VLWMLLTGKLWEMLAYVLLPL. Residues 188-226 lie on the Cytoplasmic side of the membrane; the sequence is LYLLVRKHINRAHTALSEYRPILSQEHRLLRHSSMADKK. A helical transmembrane segment spans residues 227–247; sequence LVLIPLIFIGLRVWSTVRFVL. Topologically, residues 248 to 258 are extracellular; sequence TLCGSPAVQTP. A helical membrane pass occupies residues 259–279; sequence VLVVLHGIGNTFQGGANCIMF. At 280–335 the chain is on the cytoplasmic side; the sequence is VLCTRAVRTRLFSLCCCCCSSQPPTKSPAGTPKAPAPSKPGESQESQGTPGELPST. Positions 300 to 335 are disordered; sequence SQPPTKSPAGTPKAPAPSKPGESQESQGTPGELPST. The segment covering 320-335 has biased composition (polar residues); sequence GESQESQGTPGELPST.

The protein belongs to the G-protein coupled receptor 2 family.

The protein localises to the cell projection. It localises to the cilium membrane. Its function is as follows. Orphan receptor that promotes neuronal differentiation of radial glial progenitors (RGPs). The activity of this receptor is mediated by a G(q)-protein that activates a phosphatidylinositol-calcium second messenger. In Homo sapiens (Human), this protein is G-protein coupled receptor 157 (GPR157).